We begin with the raw amino-acid sequence, 179 residues long: Hypoxanthine-guanine phosphoribosyltransferase (179 aa).

Lys-42 and Gly-43 together coordinate diphosphate. Mg(2+) is bound by residues Glu-98 and Asp-99. The Proton acceptor role is filled by Glu-102. Residues Lys-130, 151–152 (FV), and Asp-158 contribute to the GMP site. Arg-164 is a diphosphate binding site.

Belongs to the purine/pyrimidine phosphoribosyltransferase family. Mg(2+) serves as cofactor.

It localises to the cytoplasm. The catalysed reaction is IMP + diphosphate = hypoxanthine + 5-phospho-alpha-D-ribose 1-diphosphate. It catalyses the reaction GMP + diphosphate = guanine + 5-phospho-alpha-D-ribose 1-diphosphate. The protein operates within purine metabolism; IMP biosynthesis via salvage pathway; IMP from hypoxanthine: step 1/1. It functions in the pathway purine metabolism; GMP biosynthesis via salvage pathway; GMP from guanine: step 1/1. Functionally, purine salvage pathway enzyme that catalyzes the transfer of the ribosyl-5-phosphate group from 5-phospho-alpha-D-ribose 1-diphosphate (PRPP) to the N9 position of the 6-oxopurines hypoxanthine and guanine to form the corresponding ribonucleotides IMP (inosine 5'-monophosphate) and GMP (guanosine 5'-monophosphate), with the release of PPi. This chain is Hypoxanthine-guanine phosphoribosyltransferase (hpt), found in Staphylococcus epidermidis (strain ATCC 35984 / DSM 28319 / BCRC 17069 / CCUG 31568 / BM 3577 / RP62A).